The sequence spans 365 residues: UDP-N-acetylglucosamine--N-acetylmuramyl-(pentapeptide) pyrophosphoryl-undecaprenol N-acetylglucosamine transferase (365 aa).

UDP-N-acetyl-alpha-D-glucosamine-binding positions include 10-12 (TGG), Asn-128, Arg-170, Ser-199, Ile-250, and Gln-295.

Belongs to the glycosyltransferase 28 family. MurG subfamily.

It is found in the cell inner membrane. It catalyses the reaction di-trans,octa-cis-undecaprenyl diphospho-N-acetyl-alpha-D-muramoyl-L-alanyl-D-glutamyl-meso-2,6-diaminopimeloyl-D-alanyl-D-alanine + UDP-N-acetyl-alpha-D-glucosamine = di-trans,octa-cis-undecaprenyl diphospho-[N-acetyl-alpha-D-glucosaminyl-(1-&gt;4)]-N-acetyl-alpha-D-muramoyl-L-alanyl-D-glutamyl-meso-2,6-diaminopimeloyl-D-alanyl-D-alanine + UDP + H(+). It functions in the pathway cell wall biogenesis; peptidoglycan biosynthesis. Its function is as follows. Cell wall formation. Catalyzes the transfer of a GlcNAc subunit on undecaprenyl-pyrophosphoryl-MurNAc-pentapeptide (lipid intermediate I) to form undecaprenyl-pyrophosphoryl-MurNAc-(pentapeptide)GlcNAc (lipid intermediate II). This is UDP-N-acetylglucosamine--N-acetylmuramyl-(pentapeptide) pyrophosphoryl-undecaprenol N-acetylglucosamine transferase from Prosthecochloris aestuarii (strain DSM 271 / SK 413).